Here is a 421-residue protein sequence, read N- to C-terminus: Esterase LipQ (421 aa).

Residues S249, D344, and H377 contribute to the active site.

Belongs to the 'GDXG' lipolytic enzyme family.

It catalyses the reaction hexadecanoate ester + H2O = an aliphatic alcohol + hexadecanoate + H(+). Functionally, shows lipase activity. Is highly immunogenic and may play an important role in the virulence and pathogenesis of M.tuberculosis infection, by altering the balance of cytokines. Significantly down-regulates the expression level of pro-inflammatory cytokines (TNF-alpha and IFN-gamma) and up-regulates the level of anti-inflammatory cytokines such as IL-4 and IL-10 as compared to LPS stimulated macrophages. Also inhibits the expression of iNOS, TLR2 and transcription factor NF-kappa-B in LPS stimulated macrophages whereas the expression of TLR-4 remains unchanged. This is Esterase LipQ from Mycobacterium tuberculosis (strain ATCC 25618 / H37Rv).